Here is a 425-residue protein sequence, read N- to C-terminus: Tyrosine--tRNA ligase (425 aa).

Tyr34 is an L-tyrosine binding site. The 'HIGH' region signature appears at 39–48; it reads PTADSLHVGN. Residues Tyr171 and Gln175 each coordinate L-tyrosine. Positions 231–235 match the 'KMSKS' region motif; it reads KYGKS. Lys234 is an ATP binding site. One can recognise an S4 RNA-binding domain in the interval 358–424; the sequence is APLVELLVHA…GKRTYTVVKI (67 aa).

The protein belongs to the class-I aminoacyl-tRNA synthetase family. TyrS type 1 subfamily. As to quaternary structure, homodimer.

Its subcellular location is the cytoplasm. The catalysed reaction is tRNA(Tyr) + L-tyrosine + ATP = L-tyrosyl-tRNA(Tyr) + AMP + diphosphate + H(+). Functionally, catalyzes the attachment of tyrosine to tRNA(Tyr) in a two-step reaction: tyrosine is first activated by ATP to form Tyr-AMP and then transferred to the acceptor end of tRNA(Tyr). The polypeptide is Tyrosine--tRNA ligase (Opitutus terrae (strain DSM 11246 / JCM 15787 / PB90-1)).